We begin with the raw amino-acid sequence, 454 residues long: Protein phosphatase 1F (454 aa).

Positions 1–12 are enriched in polar residues; that stretch reads MSSGAPQKSSPM. The disordered stretch occupies residues 1 to 28; it reads MSSGAPQKSSPMASGAEETPGFLDTLLQ. The PPM-type phosphatase domain occupies 156–413; sequence LVSIHAIRNT…DNITVMVVFL (258 aa). Mn(2+)-binding residues include Asp-198, Gly-199, Asp-360, and Asp-404. The tract at residues 419–454 is disordered; the sequence is LLEGGNQGEGDPQAEGRRQDLPSSLPEPETQAPPRS. Position 454 is a phosphoserine (Ser-454).

Belongs to the PP2C family. In terms of assembly, associates with FEM1B. Mg(2+) serves as cofactor. Mn(2+) is required as a cofactor.

It carries out the reaction O-phospho-L-seryl-[protein] + H2O = L-seryl-[protein] + phosphate. The enzyme catalyses O-phospho-L-threonyl-[protein] + H2O = L-threonyl-[protein] + phosphate. In terms of biological role, dephosphorylates and concomitantly deactivates CaM-kinase II activated upon autophosphorylation, and CaM-kinases IV and I activated upon phosphorylation by CaM-kinase kinase. Promotes apoptosis. The sequence is that of Protein phosphatase 1F (PPM1F) from Homo sapiens (Human).